The chain runs to 929 residues: LPS-assembly protein LptD (929 aa).

The first 33 residues, 1 to 33, serve as a signal peptide directing secretion; that stretch reads MAVKSLVFRRKFPLLVTGSLLALQPVAALTVQA. The tract at residues 58–101 is disordered; the sequence is NLPPRPAHTATSVSTAAAGSSVSGSGGETVEAEPTQRLVTESGG. Positions 66–90 are enriched in low complexity; it reads TATSVSTAAAGSSVSGSGGETVEAE.

It belongs to the LptD family. Component of the lipopolysaccharide transport and assembly complex. Interacts with LptE and LptA.

The protein localises to the cell outer membrane. Together with LptE, is involved in the assembly of lipopolysaccharide (LPS) at the surface of the outer membrane. This chain is LPS-assembly protein LptD, found in Pseudomonas aeruginosa (strain LESB58).